Consider the following 143-residue polypeptide: Deoxyuridine 5'-triphosphate nucleotidohydrolase (143 aa).

The protein belongs to the dUTPase family. It depends on Mg(2+) as a cofactor.

The enzyme catalyses dUTP + H2O = dUMP + diphosphate + H(+). Functionally, this enzyme is involved in nucleotide metabolism: it produces dUMP, the immediate precursor of thymidine nucleotides and it decreases the intracellular concentration of dUTP so that uracil cannot be incorporated into DNA. This Yaba monkey tumor virus (strain VR587) (YMTV) protein is Deoxyuridine 5'-triphosphate nucleotidohydrolase (DUT).